The primary structure comprises 41 residues: Peptide Hact-SCRiP1 (41 aa).

Cystine bridges form between cysteine 5-cysteine 37, cysteine 12-cysteine 31, cysteine 19-cysteine 38, and cysteine 26-cysteine 39.

Expressed in tentacles.

Its subcellular location is the nematocyst. It is found in the secreted. Peptide with unknown function. Does not exhibit any effect on human ion channel TRPV1 in a Xenopus laevis oocytes assay. The chain is Peptide Hact-SCRiP1 from Heliofungia actiniformis (Mushroom coral).